Reading from the N-terminus, the 1033-residue chain is SIT4-associating protein SAP190 (1033 aa).

Disordered stretches follow at residues 32–82 (DQDD…TTES), 147–213 (PEII…QVET), and 768–1033 (FGND…KEAF). The span at 158-170 (ILIERDRKDKKED) shows a compositional bias: basic and acidic residues. The segment covering 171–182 (AEEGGDSEETTN) has biased composition (acidic residues). Residues 183 to 195 (DSDHDSGDERSVD) are compositionally biased toward basic and acidic residues. Ser774 is modified (phosphoserine). 2 stretches are compositionally biased toward acidic residues: residues 784 to 793 (SEDIIGDTEG) and 825 to 838 (ENEE…EYSD). Phosphoserine is present on residues Ser857, Ser862, and Ser892. The span at 858–879 (DDGKSKSAESEFTDKISEHRDG) shows a compositional bias: basic and acidic residues. Over residues 909–924 (SRSQPSDPKLQDQNIF) the composition is skewed to polar residues. Positions 932–944 (GVGDDDDYMDPND) are enriched in acidic residues. Residue Thr990 is modified to Phosphothreonine. Position 991 is a phosphoserine (Ser991). Residues 1000–1018 (ISSDEEDSEDEDEENDMGN) show a composition bias toward acidic residues.

This sequence belongs to the SAPS family. As to quaternary structure, associates with the SIT4 protein phosphatase catalytic subunit in a cell-cycle-dependent manner. Post-translationally, hyperphosphorylated in the absence of SIT4.

It localises to the cytoplasm. In terms of biological role, positive regulator of protein phosphatase SIT4. Involved in the general amino acid control (GAAC) response regulated by TOR. Involved in the dephosphorylation of the elongator complex subunit IKI3. In Saccharomyces cerevisiae (strain ATCC 204508 / S288c) (Baker's yeast), this protein is SIT4-associating protein SAP190 (SAP190).